The sequence spans 121 residues: Heme-degrading monooxygenase (121 aa).

Residues 2-101 (IIVTNTIKVE…EQREDRKGIV (100 aa)) enclose the ABM domain. Position 6 (Asn-6) interacts with Fe cation. The segment at 76–98 (KSDSFKKAHGRTKDTREQREDRK) is disordered. Over residues 78–98 (DSFKKAHGRTKDTREQREDRK) the composition is skewed to basic and acidic residues. His-84 lines the heme pocket.

Belongs to the antibiotic biosynthesis monooxygenase family. Heme-degrading monooxygenase IsdG subfamily. As to quaternary structure, homodimer.

The protein localises to the cytoplasm. It carries out the reaction heme b + 3 reduced [NADPH--hemoprotein reductase] + 3 O2 = biliverdin IXalpha + CO + Fe(2+) + 3 oxidized [NADPH--hemoprotein reductase] + 3 H2O + H(+). Its function is as follows. Allows bacterial pathogens to use the host heme as an iron source. Catalyzes the oxidative degradation of the heme macrocyclic porphyrin ring to the biliverdin in the presence of a suitable electron donor such as ascorbate or NADPH--cytochrome P450 reductase, with subsequent release of free iron. This is Heme-degrading monooxygenase from Listeria innocua serovar 6a (strain ATCC BAA-680 / CLIP 11262).